A 382-amino-acid chain; its full sequence is 1-deoxy-D-xylulose 5-phosphate reductoisomerase (382 aa).

6 residues coordinate NADPH: Thr10, Gly11, Ser12, Ile13, Gly36, and Asn122. Lys123 serves as a coordination point for 1-deoxy-D-xylulose 5-phosphate. Glu124 contributes to the NADPH binding site. Asp148 is a Mn(2+) binding site. 4 residues coordinate 1-deoxy-D-xylulose 5-phosphate: Ser149, Glu150, Ser174, and His197. Glu150 provides a ligand contact to Mn(2+). Gly203 contacts NADPH. Residues Ser210, Asn215, Lys216, and Glu219 each coordinate 1-deoxy-D-xylulose 5-phosphate. Glu219 lines the Mn(2+) pocket.

The protein belongs to the DXR family. It depends on Mg(2+) as a cofactor. Requires Mn(2+) as cofactor.

The catalysed reaction is 2-C-methyl-D-erythritol 4-phosphate + NADP(+) = 1-deoxy-D-xylulose 5-phosphate + NADPH + H(+). It functions in the pathway isoprenoid biosynthesis; isopentenyl diphosphate biosynthesis via DXP pathway; isopentenyl diphosphate from 1-deoxy-D-xylulose 5-phosphate: step 1/6. Functionally, catalyzes the NADPH-dependent rearrangement and reduction of 1-deoxy-D-xylulose-5-phosphate (DXP) to 2-C-methyl-D-erythritol 4-phosphate (MEP). This Chlorobaculum tepidum (strain ATCC 49652 / DSM 12025 / NBRC 103806 / TLS) (Chlorobium tepidum) protein is 1-deoxy-D-xylulose 5-phosphate reductoisomerase.